Here is a 930-residue protein sequence, read N- to C-terminus: Isoleucine--tRNA ligase (930 aa).

The 'HIGH' region motif lies at 57 to 67 (PYANGNIHVGH). Glu-554 is a binding site for L-isoleucyl-5'-AMP. The short motif at 595-599 (KMSKS) is the 'KMSKS' region element. Residue Lys-598 coordinates ATP. Residues Cys-888, Cys-891, Cys-908, and Cys-911 each contribute to the Zn(2+) site.

The protein belongs to the class-I aminoacyl-tRNA synthetase family. IleS type 1 subfamily. Monomer. The cofactor is Zn(2+).

It localises to the cytoplasm. It carries out the reaction tRNA(Ile) + L-isoleucine + ATP = L-isoleucyl-tRNA(Ile) + AMP + diphosphate. Catalyzes the attachment of isoleucine to tRNA(Ile). As IleRS can inadvertently accommodate and process structurally similar amino acids such as valine, to avoid such errors it has two additional distinct tRNA(Ile)-dependent editing activities. One activity is designated as 'pretransfer' editing and involves the hydrolysis of activated Val-AMP. The other activity is designated 'posttransfer' editing and involves deacylation of mischarged Val-tRNA(Ile). In Streptococcus gordonii (strain Challis / ATCC 35105 / BCRC 15272 / CH1 / DL1 / V288), this protein is Isoleucine--tRNA ligase.